The primary structure comprises 184 residues: Photosystem I assembly protein Ycf4 (184 aa).

2 helical membrane passes run 19–39 (ISNF…LLVG) and 57–77 (IIFF…LFIS).

It belongs to the Ycf4 family.

Its subcellular location is the plastid. It localises to the chloroplast thylakoid membrane. Seems to be required for the assembly of the photosystem I complex. The sequence is that of Photosystem I assembly protein Ycf4 from Nicotiana sylvestris (Wood tobacco).